Reading from the N-terminus, the 457-residue chain is Bifunctional protein GlmU (457 aa).

Positions 1 to 232 (MNNLAAVILA…PAEVMGINDR (232 aa)) are pyrophosphorylase. UDP-N-acetyl-alpha-D-glucosamine is bound by residues 9-12 (LAAG), Lys23, Gln75, and 80-81 (GT). Asp105 serves as a coordination point for Mg(2+). UDP-N-acetyl-alpha-D-glucosamine-binding residues include Gly142, Glu157, Asn172, and Asn230. Asn230 lines the Mg(2+) pocket. Residues 233-253 (AQLAEAGQLLRGRINKALMLD) are linker. The tract at residues 254-457 (GTTLIDPQTT…NKEGWKLKKK (204 aa)) is N-acetyltransferase. Arg336 and Lys354 together coordinate UDP-N-acetyl-alpha-D-glucosamine. Catalysis depends on His366, which acts as the Proton acceptor. UDP-N-acetyl-alpha-D-glucosamine contacts are provided by Tyr369 and Asn380. Residues 389 to 390 (NY), Ser408, Ala426, and Arg443 contribute to the acetyl-CoA site.

It in the N-terminal section; belongs to the N-acetylglucosamine-1-phosphate uridyltransferase family. The protein in the C-terminal section; belongs to the transferase hexapeptide repeat family. Homotrimer. It depends on Mg(2+) as a cofactor.

Its subcellular location is the cytoplasm. It carries out the reaction alpha-D-glucosamine 1-phosphate + acetyl-CoA = N-acetyl-alpha-D-glucosamine 1-phosphate + CoA + H(+). The catalysed reaction is N-acetyl-alpha-D-glucosamine 1-phosphate + UTP + H(+) = UDP-N-acetyl-alpha-D-glucosamine + diphosphate. It participates in nucleotide-sugar biosynthesis; UDP-N-acetyl-alpha-D-glucosamine biosynthesis; N-acetyl-alpha-D-glucosamine 1-phosphate from alpha-D-glucosamine 6-phosphate (route II): step 2/2. Its pathway is nucleotide-sugar biosynthesis; UDP-N-acetyl-alpha-D-glucosamine biosynthesis; UDP-N-acetyl-alpha-D-glucosamine from N-acetyl-alpha-D-glucosamine 1-phosphate: step 1/1. It functions in the pathway bacterial outer membrane biogenesis; LPS lipid A biosynthesis. Catalyzes the last two sequential reactions in the de novo biosynthetic pathway for UDP-N-acetylglucosamine (UDP-GlcNAc). The C-terminal domain catalyzes the transfer of acetyl group from acetyl coenzyme A to glucosamine-1-phosphate (GlcN-1-P) to produce N-acetylglucosamine-1-phosphate (GlcNAc-1-P), which is converted into UDP-GlcNAc by the transfer of uridine 5-monophosphate (from uridine 5-triphosphate), a reaction catalyzed by the N-terminal domain. This is Bifunctional protein GlmU from Geotalea uraniireducens (strain Rf4) (Geobacter uraniireducens).